The chain runs to 331 residues: Probable transcriptional regulatory protein At2g25830 (331 aa).

It belongs to the TACO1 family.

The sequence is that of Probable transcriptional regulatory protein At2g25830 from Arabidopsis thaliana (Mouse-ear cress).